Reading from the N-terminus, the 310-residue chain is tRNA dimethylallyltransferase (310 aa).

10-17 (GPTAVGKS) contacts ATP. 12-17 (TAVGKS) lines the substrate pocket. The tract at residues 35–38 (DSMQ) is interaction with substrate tRNA.

It belongs to the IPP transferase family. In terms of assembly, monomer. Requires Mg(2+) as cofactor.

It catalyses the reaction adenosine(37) in tRNA + dimethylallyl diphosphate = N(6)-dimethylallyladenosine(37) in tRNA + diphosphate. Catalyzes the transfer of a dimethylallyl group onto the adenine at position 37 in tRNAs that read codons beginning with uridine, leading to the formation of N6-(dimethylallyl)adenosine (i(6)A). This Clostridium perfringens (strain SM101 / Type A) protein is tRNA dimethylallyltransferase.